The chain runs to 142 residues: uncharacterized protein (142 aa).

Residues 1 to 138 form the N-acetyltransferase domain; it reads MLEKLAEAHP…SFMILVKPLA (138 aa).

This is an uncharacterized protein from Bacillus subtilis (strain 168).